The sequence spans 196 residues: Probable GTP-binding protein EngB (196 aa).

Residues Glu24–Ser196 form the EngB-type G domain. Residues Gly32–Ser39, Gly59–Thr63, Asp77–Gly80, Thr144–Asp147, and Tyr176–Ser178 contribute to the GTP site. Mg(2+) contacts are provided by Ser39 and Thr61.

Belongs to the TRAFAC class TrmE-Era-EngA-EngB-Septin-like GTPase superfamily. EngB GTPase family. The cofactor is Mg(2+).

In terms of biological role, necessary for normal cell division and for the maintenance of normal septation. This Staphylococcus aureus (strain MW2) protein is Probable GTP-binding protein EngB.